The sequence spans 123 residues: Large ribosomal subunit protein uL14c (123 aa).

This sequence belongs to the universal ribosomal protein uL14 family. Part of the 50S ribosomal subunit. Interacts with IOJAP.

Its subcellular location is the plastid. It localises to the chloroplast. Its function is as follows. Binds to 23S rRNA. This is Large ribosomal subunit protein uL14c from Zea mays (Maize).